The sequence spans 209 residues: Protease (209 aa).

Catalysis depends on residues His-60, Asp-77, and Cys-127.

It belongs to the peptidase C5 family. Interacts with protease cofactor pVI-C; this interaction is necessary for protease activation.

It is found in the virion. It localises to the host nucleus. It catalyses the reaction Cleaves proteins of the adenovirus and its host cell at two consensus sites: -Yaa-Xaa-Gly-Gly-|-Xaa- and -Yaa-Xaa-Gly-Xaa-|-Gly- (in which Yaa is Met, Ile or Leu, and Xaa is any amino acid).. With respect to regulation, requires DNA and protease cofactor for maximal activation. Inside nascent virions, becomes partially activated by binding to the viral DNA, allowing it to cleave the cofactor that binds to the protease and fully activates it. Actin, like the viral protease cofactor, seems to act as a cofactor in the cleavage of cytokeratin 18 and of actin itself. Functionally, cleaves viral precursor proteins (pTP, pIIIa, pVI, pVII, pVIII, and pX) inside newly assembled particles giving rise to mature virions. Protease complexed to its cofactor slides along the viral DNA to specifically locate and cleave the viral precursors. Mature virions have a weakened organization compared to the unmature virions, thereby facilitating subsequent uncoating. Without maturation, the particle lacks infectivity and is unable to uncoat. Late in adenovirus infection, in the cytoplasm, may participate in the cytoskeleton destruction. Cleaves host cell cytoskeletal keratins K7 and K18. The chain is Protease from Homo sapiens (Human).